Here is a 469-residue protein sequence, read N- to C-terminus: Ribulose bisphosphate carboxylase large chain (469 aa).

The residue at position 8 (K8) is an N6,N6,N6-trimethyllysine. Positions 117 and 167 each coordinate substrate. K169 serves as the catalytic Proton acceptor. K171 is a substrate binding site. Residues K195, D197, and E198 each coordinate Mg(2+). Position 195 is an N6-carboxylysine (K195). H288 acts as the Proton acceptor in catalysis. Substrate contacts are provided by R289, H321, and S373.

This sequence belongs to the RuBisCO large chain family. Type I subfamily. In terms of assembly, heterohexadecamer of 8 large chains and 8 small chains; disulfide-linked. The disulfide link is formed within the large subunit homodimers. The cofactor is Mg(2+). In terms of processing, the disulfide bond which can form in the large chain dimeric partners within the hexadecamer appears to be associated with oxidative stress and protein turnover.

The protein resides in the plastid. Its subcellular location is the chloroplast. It catalyses the reaction 2 (2R)-3-phosphoglycerate + 2 H(+) = D-ribulose 1,5-bisphosphate + CO2 + H2O. The enzyme catalyses D-ribulose 1,5-bisphosphate + O2 = 2-phosphoglycolate + (2R)-3-phosphoglycerate + 2 H(+). Functionally, ruBisCO catalyzes two reactions: the carboxylation of D-ribulose 1,5-bisphosphate, the primary event in carbon dioxide fixation, as well as the oxidative fragmentation of the pentose substrate in the photorespiration process. Both reactions occur simultaneously and in competition at the same active site. This Coleonema pulchellum (Confetti bush) protein is Ribulose bisphosphate carboxylase large chain.